The chain runs to 622 residues: Basic helix-loop-helix ARNT-like protein 2 (622 aa).

The span at 1 to 10 (MAEAGVGSAE) shows a compositional bias: low complexity. Disordered regions lie at residues 1-29 (MAEA…DGNS) and 41-86 (PITK…EDEE). Residues 45 to 54 (PATTSFNNSV) show a composition bias toward polar residues. Residues 67–76 (DNQDTVEVDG) are compositionally biased toward acidic residues. Positions 77-86 (DPQKRNEDEE) are enriched in basic and acidic residues. The bHLH domain occupies 92 to 145 (DFREAHSQTEKRRRDKMNNLIEELSAMIPQCNPMARKLDKLTVLRMAVQHLKSL). PAS domains are found at residues 163–235 (KDDE…DVSP) and 342–412 (VPQK…LQNK). In terms of domain architecture, PAC spans 417 to 460 (TNSYKFRAKDGSFITLKSQWFSFMNPWTKELEYIVSNNTVVLGH).

Component of the circadian core oscillator, which includes the CRY proteins, CLOCK, or NPAS2, BMAL1 or BMAL2, CSNK1D and/or CSNK1E, TIMELESS and the PER proteins. Interacts directly with CLOCK to form the BMAL2-CLOCK transactivator. Can form heterodimers or homodimers which interact directly with CLOCK to form the transcription activator. In terms of tissue distribution, expressed in the pineal gland.

It is found in the nucleus. Functionally, transcriptional activator which forms a core component of the circadian clock. The circadian clock, an internal time-keeping system, regulates various physiological processes through the generation of approximately 24 hour circadian rhythms in gene expression, which are translated into rhythms in metabolism and behavior. It is derived from the Latin roots 'circa' (about) and 'diem' (day) and acts as an important regulator of a wide array of physiological functions including metabolism, sleep, body temperature, blood pressure, endocrine, immune, cardiovascular, and renal function. Consists of two major components: the central clock, residing in the suprachiasmatic nucleus (SCN) of the brain, and the peripheral clocks that are present in nearly every tissue and organ system. Both the central and peripheral clocks can be reset by environmental cues, also known as Zeitgebers (German for 'timegivers'). The predominant Zeitgeber for the central clock is light, which is sensed by retina and signals directly to the SCN. The central clock entrains the peripheral clocks through neuronal and hormonal signals, body temperature and feeding-related cues, aligning all clocks with the external light/dark cycle. Circadian rhythms allow an organism to achieve temporal homeostasis with its environment at the molecular level by regulating gene expression to create a peak of protein expression once every 24 hours to control when a particular physiological process is most active with respect to the solar day. Transcription and translation of core clock components (CLOCK, NPAS2, BMAL1, BMAL2, PER1, PER2, PER3, CRY1 and CRY2) plays a critical role in rhythm generation, whereas delays imposed by post-translational modifications (PTMs) are important for determining the period (tau) of the rhythms (tau refers to the period of a rhythm and is the length, in time, of one complete cycle). A diurnal rhythm is synchronized with the day/night cycle, while the ultradian and infradian rhythms have a period shorter and longer than 24 hours, respectively. Disruptions in the circadian rhythms contribute to the pathology of cardiovascular diseases, cancer, metabolic syndromes and aging. A transcription/translation feedback loop (TTFL) forms the core of the molecular circadian clock mechanism. Transcription factors, CLOCK or NPAS2 and BMAL1 or BMAL2, form the positive limb of the feedback loop, act in the form of a heterodimer and activate the transcription of core clock genes and clock-controlled genes (involved in key metabolic processes), harboring E-box elements (5'-CACGTG-3') within their promoters. The core clock genes: PER1/2/3 and CRY1/2 which are transcriptional repressors form the negative limb of the feedback loop and interact with the CLOCK|NPAS2-BMAL1|BMAL2 heterodimer inhibiting its activity and thereby negatively regulating their own expression. This heterodimer also activates nuclear receptors NR1D1/2 and RORA/B/G, which form a second feedback loop and which activate and repress BMAL1 transcription, respectively. The preferred binding motif for the CLOCK-BMAL1 heterodimer is 5'-CACGTGA-3', which contains a flanking adenine nucleotide at the 3-prime end of the canonical 6-nucleotide E-box sequence. CLOCK specifically binds to the half-site 5'-CAC-3', while BMAL1 binds to the half-site 5'-GTGA-3'. This Gallus gallus (Chicken) protein is Basic helix-loop-helix ARNT-like protein 2 (BMAL2).